A 214-amino-acid polypeptide reads, in one-letter code: Holliday junction branch migration complex subunit RuvA (214 aa).

The tract at residues 1–64 (MITRIRGEML…EDAMTLYGFT (64 aa)) is domain I. The tract at residues 65-143 (SGEQLAVFEL…DITSKDAYQD (79 aa)) is domain II. The flexible linker stretch occupies residues 144 to 160 (ISASEKLDNTGEKLGIS). The segment at 161–214 (TRHKHLDELKAALSSLGYTNREIEKTVDAIQGQITEGQDMEELLRLALQKLNTK) is domain III.

It belongs to the RuvA family. Homotetramer. Forms an RuvA(8)-RuvB(12)-Holliday junction (HJ) complex. HJ DNA is sandwiched between 2 RuvA tetramers; dsDNA enters through RuvA and exits via RuvB. An RuvB hexamer assembles on each DNA strand where it exits the tetramer. Each RuvB hexamer is contacted by two RuvA subunits (via domain III) on 2 adjacent RuvB subunits; this complex drives branch migration. In the full resolvosome a probable DNA-RuvA(4)-RuvB(12)-RuvC(2) complex forms which resolves the HJ.

Its subcellular location is the cytoplasm. Functionally, the RuvA-RuvB-RuvC complex processes Holliday junction (HJ) DNA during genetic recombination and DNA repair, while the RuvA-RuvB complex plays an important role in the rescue of blocked DNA replication forks via replication fork reversal (RFR). RuvA specifically binds to HJ cruciform DNA, conferring on it an open structure. The RuvB hexamer acts as an ATP-dependent pump, pulling dsDNA into and through the RuvAB complex. HJ branch migration allows RuvC to scan DNA until it finds its consensus sequence, where it cleaves and resolves the cruciform DNA. This is Holliday junction branch migration complex subunit RuvA from Natranaerobius thermophilus (strain ATCC BAA-1301 / DSM 18059 / JW/NM-WN-LF).